The chain runs to 349 residues: 4-hydroxy-2-oxovalerate aldolase 1 (349 aa).

The Pyruvate carboxyltransferase domain maps to Ile-9–Gln-261. Arg-17 to Asp-18 lines the substrate pocket. A Mn(2+)-binding site is contributed by Asp-18. His-21 acts as the Proton acceptor in catalysis. Substrate-binding residues include Ser-171 and His-200. Mn(2+) contacts are provided by His-200 and His-202. Tyr-291 contributes to the substrate binding site.

The protein belongs to the 4-hydroxy-2-oxovalerate aldolase family.

The catalysed reaction is (S)-4-hydroxy-2-oxopentanoate = acetaldehyde + pyruvate. This is 4-hydroxy-2-oxovalerate aldolase 1 from Methylibium petroleiphilum (strain ATCC BAA-1232 / LMG 22953 / PM1).